The following is a 616-amino-acid chain: Mitochondrial Rho GTPase 2 (616 aa).

Over 1-590 (MKRDVRILLL…HDTELSTASF (590 aa)) the chain is Cytoplasmic. The 167-residue stretch at 2-168 (KRDVRILLLG…FYYAQKAVLH (167 aa)) folds into the Miro 1 domain. GTP-binding residues include G16, K17, T18, and S19. T18 is a binding site for Mg(2+). D57 is a Mg(2+) binding site. Residues S59, N118, K119, D121, A149, and K150 each coordinate GTP. EF-hand domains follow at residues 184–219 (QCKK…CFGN) and 304–339 (FGYQ…FPYT). 7 residues coordinate Ca(2+): D199, N201, E208, D317, D319, D321, and E328. The region spanning 416–577 (RNVFLCRVIG…YSKLATAAAF (162 aa)) is the Miro 2 domain. GTP is bound by residues G428, G430, K431, S432, and A433. A Mg(2+)-binding site is contributed by S432. E474 is a binding site for Mg(2+). The GTP site is built by K528, D530, and C559. Residues 591-613 (WLRVALGATVAAVVGFTLYKALL) form a helical; Anchor for type IV membrane protein membrane-spanning segment. Over 614–616 (RSK) the chain is Mitochondrial intermembrane.

This sequence belongs to the mitochondrial Rho GTPase family. Homodimer.

It localises to the mitochondrion outer membrane. The catalysed reaction is GTP + H2O = GDP + phosphate + H(+). The enzyme catalyses ATP + H2O = ADP + phosphate + H(+). It carries out the reaction UTP + H2O = UDP + phosphate + H(+). Its function is as follows. Atypical mitochondrial nucleoside-triphosphatase (NTPase) involved in mitochondrial trafficking. Probably involved in control of anterograde transport of mitochondria and their subcellular distribution. Can hydrolyze GTP, ATP and UTP. This Xenopus tropicalis (Western clawed frog) protein is Mitochondrial Rho GTPase 2 (rhot2).